Reading from the N-terminus, the 96-residue chain is Large ribosomal subunit protein uL23 (96 aa).

It belongs to the universal ribosomal protein uL23 family. In terms of assembly, part of the 50S ribosomal subunit. Contacts protein L29, and trigger factor when it is bound to the ribosome.

In terms of biological role, one of the early assembly proteins it binds 23S rRNA. One of the proteins that surrounds the polypeptide exit tunnel on the outside of the ribosome. Forms the main docking site for trigger factor binding to the ribosome. The protein is Large ribosomal subunit protein uL23 of Clostridium novyi (strain NT).